A 199-amino-acid chain; its full sequence is FMN-dependent NADH:quinone oxidoreductase (199 aa).

FMN is bound at residue 17-19; it reads SYS.

This sequence belongs to the azoreductase type 1 family. In terms of assembly, homodimer. FMN is required as a cofactor.

The enzyme catalyses 2 a quinone + NADH + H(+) = 2 a 1,4-benzosemiquinone + NAD(+). It catalyses the reaction N,N-dimethyl-1,4-phenylenediamine + anthranilate + 2 NAD(+) = 2-(4-dimethylaminophenyl)diazenylbenzoate + 2 NADH + 2 H(+). Quinone reductase that provides resistance to thiol-specific stress caused by electrophilic quinones. In terms of biological role, also exhibits azoreductase activity. Catalyzes the reductive cleavage of the azo bond in aromatic azo compounds to the corresponding amines. The polypeptide is FMN-dependent NADH:quinone oxidoreductase (Mycoplasmopsis synoviae (strain 53) (Mycoplasma synoviae)).